A 455-amino-acid chain; its full sequence is Folate transporter 2 (455 aa).

8 consecutive transmembrane segments (helical) span residues 42 to 64 (IVVYLVGLSDGLTHLASLAIYYL), 84 to 103 (YIPFILKPVIALITDSFSIF), 110 to 131 (YLFLFSLFQSLNFLALAFLNLS), 137 to 157 (LILFFISLCASFCTTVAEALV), 177 to 195 (IASKAIGSLSVAYFSGYFL), 201 to 221 (EYIFIATSIFPLIISLSCLFL), 242 to 261 (FINTPIFLGPFLYIFVYMSG), and 281 to 301 (SFMGTLRLTYGIASLIGIIIY). N-linked (GlcNAc...) asparagine glycosylation is present at Asn-307. 2 helical membrane passes run 313–331 (TLIITTLVSFPIYISPIIL) and 347–367 (VLSGGFLIEAITEIQLLPLFI). A glycan (N-linked (GlcNAc...) asparagine) is linked at Asn-416. A helical transmembrane segment spans residues 417–438 (LSLYILTCGFFLLFSLTLVPLL).

Belongs to the major facilitator superfamily. Folate-biopterin transporter (TC 2.A.71) family.

Its subcellular location is the cell membrane. The catalysed reaction is folate(in) + H(+)(in) = folate(out) + H(+)(out). The enzyme catalyses (6S)-5-methyl-5,6,7,8-tetrahydrofolate(in) + H(+)(in) = (6S)-5-methyl-5,6,7,8-tetrahydrofolate(out) + H(+)(out). Its activity is regulated as follows. Transport of folates is inhibited by probenecid and methotrexate. In terms of biological role, folate transporter with broad substrate specificity. Transports folic acid, folinic acid, pteroic acid, dihydropteroic acid, the folate precursor p-amino benzoic acid (pABA) and the human folate catabolite pABA monoglutamate. Can transport 5-methyltetrahydrofolate with low efficiency. The sequence is that of Folate transporter 2 from Plasmodium falciparum (isolate 3D7).